The following is a 456-amino-acid chain: MSTSPLSVVILAAGKGTRMYSDLPKVLHPLAGKPMVQHVIDSALTLGARQVHLVYGHGGDLLKAHLSGQPLNWVLQAQQLGTGHAMQQAAPDFSDDEDILMLYGDVPLISAATLQRLIAAKPQGGIGLLTVKLDDPSGYGRIVRHHDRVVGIVEHKDASEAQRRINEINTGILVANGVDLKRWLARLDNNNAQGEFYITDIIAMAHQEGRQIAAVHPERLSEVEGVNNRLQLSALERAYQQQQAQRLLLAGVMLTDPARFDLRGELVHGRDVVIDTNVIIEGKVTLGNRVHIGSGCVLKDCQIADDSVISPYTVIEGARLAQACTVGPFARLRPGACLDAEAHVGNFVEMKKAHLGRGSKAGHLSYLGDAEIGAGVNIGAGTITCNYDGANKHQTVIGDDVFVGSDSQLVAPVTVGRGATIAAGTTVTKNVGDGELVLSRVKQVQLSGWERPVKKK.

A pyrophosphorylase region spans residues 1-229 (MSTSPLSVVI…LSEVEGVNNR (229 aa)). Residues 11-14 (LAAG), lysine 25, glutamine 76, 81-82 (GT), 103-105 (YGD), glycine 140, glutamate 154, asparagine 169, and asparagine 227 contribute to the UDP-N-acetyl-alpha-D-glucosamine site. Aspartate 105 lines the Mg(2+) pocket. A Mg(2+)-binding site is contributed by asparagine 227. Residues 230 to 250 (LQLSALERAYQQQQAQRLLLA) form a linker region. The N-acetyltransferase stretch occupies residues 251-456 (GVMLTDPARF…SGWERPVKKK (206 aa)). 2 residues coordinate UDP-N-acetyl-alpha-D-glucosamine: arginine 333 and lysine 351. Histidine 363 (proton acceptor) is an active-site residue. Residues tyrosine 366 and asparagine 377 each contribute to the UDP-N-acetyl-alpha-D-glucosamine site. Residues alanine 380, 386 to 387 (NY), serine 405, alanine 423, and arginine 440 each bind acetyl-CoA.

It in the N-terminal section; belongs to the N-acetylglucosamine-1-phosphate uridyltransferase family. In the C-terminal section; belongs to the transferase hexapeptide repeat family. In terms of assembly, homotrimer. Requires Mg(2+) as cofactor.

The protein localises to the cytoplasm. The catalysed reaction is alpha-D-glucosamine 1-phosphate + acetyl-CoA = N-acetyl-alpha-D-glucosamine 1-phosphate + CoA + H(+). The enzyme catalyses N-acetyl-alpha-D-glucosamine 1-phosphate + UTP + H(+) = UDP-N-acetyl-alpha-D-glucosamine + diphosphate. The protein operates within nucleotide-sugar biosynthesis; UDP-N-acetyl-alpha-D-glucosamine biosynthesis; N-acetyl-alpha-D-glucosamine 1-phosphate from alpha-D-glucosamine 6-phosphate (route II): step 2/2. Its pathway is nucleotide-sugar biosynthesis; UDP-N-acetyl-alpha-D-glucosamine biosynthesis; UDP-N-acetyl-alpha-D-glucosamine from N-acetyl-alpha-D-glucosamine 1-phosphate: step 1/1. It participates in bacterial outer membrane biogenesis; LPS lipid A biosynthesis. Its function is as follows. Catalyzes the last two sequential reactions in the de novo biosynthetic pathway for UDP-N-acetylglucosamine (UDP-GlcNAc). The C-terminal domain catalyzes the transfer of acetyl group from acetyl coenzyme A to glucosamine-1-phosphate (GlcN-1-P) to produce N-acetylglucosamine-1-phosphate (GlcNAc-1-P), which is converted into UDP-GlcNAc by the transfer of uridine 5-monophosphate (from uridine 5-triphosphate), a reaction catalyzed by the N-terminal domain. The polypeptide is Bifunctional protein GlmU (Edwardsiella ictaluri (strain 93-146)).